A 358-amino-acid chain; its full sequence is MDNVEDLRGTLLSAVAEAGDLDALDAIRVSALGKKGQITGLMKTLGAMDPEARKAAGQALNLVKDEIAAALDARKADLAAAALEAKLARERLDVSLAPAPEATGAIHPISQTWEEVVAIFAQMGFEVAEGPEIEDDFHNFTALNFPPGHPARAMHDTFFLPTREDGSRHLLRTHTSPVQIRTMMGRKPPIRILAPGRTYRCDSDMTHTPMFHQFEGLVIDKATHFGHLKGCLHEFVRAYFEVDDLPMRFRPSFFPFTEPSAEVDIGCSRKGGALKIGAGDSWLEILGCGMVHPNVLTACGLDPEEYQGFAFGMGLERIAMLKYGIPDLRTFFESDLRWLRHYGFAALDLPTLHGGLSR.

Mg(2+) is bound at residue Glu258.

The protein belongs to the class-II aminoacyl-tRNA synthetase family. Phe-tRNA synthetase alpha subunit type 1 subfamily. Tetramer of two alpha and two beta subunits. Requires Mg(2+) as cofactor.

Its subcellular location is the cytoplasm. It carries out the reaction tRNA(Phe) + L-phenylalanine + ATP = L-phenylalanyl-tRNA(Phe) + AMP + diphosphate + H(+). The sequence is that of Phenylalanine--tRNA ligase alpha subunit from Rhodospirillum rubrum (strain ATCC 11170 / ATH 1.1.1 / DSM 467 / LMG 4362 / NCIMB 8255 / S1).